We begin with the raw amino-acid sequence, 362 residues long: UDP-N-acetylglucosamine--N-acetylmuramyl-(pentapeptide) pyrophosphoryl-undecaprenol N-acetylglucosamine transferase (362 aa).

UDP-N-acetyl-alpha-D-glucosamine-binding positions include threonine 15 to glycine 17, asparagine 127, arginine 165, serine 191, isoleucine 247, alanine 266 to glutamate 271, and glutamine 292.

The protein belongs to the glycosyltransferase 28 family. MurG subfamily.

The protein resides in the cell inner membrane. The enzyme catalyses di-trans,octa-cis-undecaprenyl diphospho-N-acetyl-alpha-D-muramoyl-L-alanyl-D-glutamyl-meso-2,6-diaminopimeloyl-D-alanyl-D-alanine + UDP-N-acetyl-alpha-D-glucosamine = di-trans,octa-cis-undecaprenyl diphospho-[N-acetyl-alpha-D-glucosaminyl-(1-&gt;4)]-N-acetyl-alpha-D-muramoyl-L-alanyl-D-glutamyl-meso-2,6-diaminopimeloyl-D-alanyl-D-alanine + UDP + H(+). Its pathway is cell wall biogenesis; peptidoglycan biosynthesis. Cell wall formation. Catalyzes the transfer of a GlcNAc subunit on undecaprenyl-pyrophosphoryl-MurNAc-pentapeptide (lipid intermediate I) to form undecaprenyl-pyrophosphoryl-MurNAc-(pentapeptide)GlcNAc (lipid intermediate II). The sequence is that of UDP-N-acetylglucosamine--N-acetylmuramyl-(pentapeptide) pyrophosphoryl-undecaprenol N-acetylglucosamine transferase from Shewanella baltica (strain OS155 / ATCC BAA-1091).